A 74-amino-acid chain; its full sequence is Large ribosomal subunit protein uL29 (74 aa).

The protein belongs to the universal ribosomal protein uL29 family.

The sequence is that of Large ribosomal subunit protein uL29 from Cyanothece sp. (strain PCC 7425 / ATCC 29141).